We begin with the raw amino-acid sequence, 735 residues long: Phosphoribosylformylglycinamidine synthase subunit PurL (735 aa).

His49 is a catalytic residue. The ATP site is built by Tyr52 and Lys91. Position 93 (Glu93) interacts with Mg(2+). Residues 94–97 (SHNH) and Arg116 each bind substrate. Residue His95 is the Proton acceptor of the active site. Asp117 contacts Mg(2+). Gln240 contacts substrate. Asp268 serves as a coordination point for Mg(2+). 312–314 (ESQ) serves as a coordination point for substrate. ATP contacts are provided by Asp493 and Gly530. Position 531 (Asn531) interacts with Mg(2+). Ser533 serves as a coordination point for substrate.

The protein belongs to the FGAMS family. In terms of assembly, monomer. Part of the FGAM synthase complex composed of 1 PurL, 1 PurQ and 2 PurS subunits.

It localises to the cytoplasm. The catalysed reaction is N(2)-formyl-N(1)-(5-phospho-beta-D-ribosyl)glycinamide + L-glutamine + ATP + H2O = 2-formamido-N(1)-(5-O-phospho-beta-D-ribosyl)acetamidine + L-glutamate + ADP + phosphate + H(+). It functions in the pathway purine metabolism; IMP biosynthesis via de novo pathway; 5-amino-1-(5-phospho-D-ribosyl)imidazole from N(2)-formyl-N(1)-(5-phospho-D-ribosyl)glycinamide: step 1/2. Functionally, part of the phosphoribosylformylglycinamidine synthase complex involved in the purines biosynthetic pathway. Catalyzes the ATP-dependent conversion of formylglycinamide ribonucleotide (FGAR) and glutamine to yield formylglycinamidine ribonucleotide (FGAM) and glutamate. The FGAM synthase complex is composed of three subunits. PurQ produces an ammonia molecule by converting glutamine to glutamate. PurL transfers the ammonia molecule to FGAR to form FGAM in an ATP-dependent manner. PurS interacts with PurQ and PurL and is thought to assist in the transfer of the ammonia molecule from PurQ to PurL. This Methylocella silvestris (strain DSM 15510 / CIP 108128 / LMG 27833 / NCIMB 13906 / BL2) protein is Phosphoribosylformylglycinamidine synthase subunit PurL.